Consider the following 144-residue polypeptide: Large ribosomal subunit protein uL15 (144 aa).

The tract at residues 1-53 (MRLNTLSPAEGSKHASKRPGRGIGSGLGKTGGRGHKGQKSRSGGGVRRGFEGG) is disordered. Residues 21–31 (RGIGSGLGKTG) are compositionally biased toward gly residues.

It belongs to the universal ribosomal protein uL15 family. Part of the 50S ribosomal subunit.

Functionally, binds to the 23S rRNA. This Sodalis glossinidius (strain morsitans) protein is Large ribosomal subunit protein uL15.